We begin with the raw amino-acid sequence, 616 residues long: DEAD-box ATP-dependent RNA helicase 53, mitochondrial (616 aa).

A mitochondrion-targeting transit peptide spans 1–81 (MITTVLRRSL…DFRASMVSQA (81 aa)). The Q motif signature appears at 104-132 (LAISELGISPEIVKALSSKGIEKLFPIQK). In terms of domain architecture, Helicase ATP-binding spans 135-309 (LEPAMEGRDM…KKYLNNPLTV (175 aa)). 148-155 (ARTGTGKT) is a binding site for ATP. Residues 257–260 (DEAD) carry the DEAD box motif. The Helicase C-terminal domain occupies 338-482 (IIGPLVTEHA…ELPSIAVERG (145 aa)). A disordered region spans residues 489 to 616 (GIGSRSGGSF…FGSNDGKRSY (128 aa)). 2 stretches are compositionally biased toward gly residues: residues 492 to 501 (SRSGGSFGGG) and 508 to 531 (SFGG…GRSG). 2 stretches are compositionally biased toward low complexity: residues 532–568 (GSSN…SGGR) and 578–587 (GSSNNRSSGF).

The protein belongs to the DEAD box helicase family. DDX21/DDX50 subfamily.

It localises to the mitochondrion. It catalyses the reaction ATP + H2O = ADP + phosphate + H(+). The chain is DEAD-box ATP-dependent RNA helicase 53, mitochondrial (RH53) from Arabidopsis thaliana (Mouse-ear cress).